Reading from the N-terminus, the 386-residue chain is Patatin-15 (386 aa).

Positions 1–23 are cleaved as a signal peptide; the sequence is MATTKSFLILFFMILATTSSTCA. The PNPLA domain maps to 32–229; the sequence is LSIDGGGIKG…TVGDPALLSL (198 aa). Positions 36 to 41 match the GXGXXG motif; that stretch reads GGGIKG. The GXSXG motif lies at 75-79; it reads GTSTG. Residue Ser-77 is the Nucleophile of the active site. Asn-115 carries an N-linked (GlcNAc...) asparagine glycan. Catalysis depends on Asp-215, which acts as the Proton acceptor. The DGA/G motif lies at 215–217; the sequence is DGG. Positions 321–384 form a coiled coil; it reads ENALTGTTTE…DRKKLRANKA (64 aa).

Belongs to the patatin family. Tuber.

The protein resides in the vacuole. Functionally, probable lipolytic acyl hydrolase (LAH), an activity which is thought to be involved in the response of tubers to pathogens. The sequence is that of Patatin-15 from Solanum tuberosum (Potato).